The chain runs to 200 residues: Recombination protein RecR (200 aa).

The C4-type zinc finger occupies 58-73 (CQVCGNMDTENICGIC). One can recognise a Toprim domain in the interval 81–176 (SVIAIVETVA…KISRLASGIP (96 aa)).

The protein belongs to the RecR family.

Its function is as follows. May play a role in DNA repair. It seems to be involved in an RecBC-independent recombinational process of DNA repair. It may act with RecF and RecO. This is Recombination protein RecR from Rickettsia bellii (strain OSU 85-389).